Consider the following 242-residue polypeptide: 1-(5-phosphoribosyl)-5-[(5-phosphoribosylamino)methylideneamino] imidazole-4-carboxamide isomerase (242 aa).

Asp8 serves as the catalytic Proton acceptor. The Proton donor role is filled by Asp129.

It belongs to the HisA/HisF family.

It localises to the cytoplasm. The catalysed reaction is 1-(5-phospho-beta-D-ribosyl)-5-[(5-phospho-beta-D-ribosylamino)methylideneamino]imidazole-4-carboxamide = 5-[(5-phospho-1-deoxy-D-ribulos-1-ylimino)methylamino]-1-(5-phospho-beta-D-ribosyl)imidazole-4-carboxamide. The protein operates within amino-acid biosynthesis; L-histidine biosynthesis; L-histidine from 5-phospho-alpha-D-ribose 1-diphosphate: step 4/9. The sequence is that of 1-(5-phosphoribosyl)-5-[(5-phosphoribosylamino)methylideneamino] imidazole-4-carboxamide isomerase from Clostridium botulinum (strain Langeland / NCTC 10281 / Type F).